The sequence spans 109 residues: Nucleoid-associated protein HD_0326 (109 aa).

It belongs to the YbaB/EbfC family. Homodimer.

The protein localises to the cytoplasm. The protein resides in the nucleoid. In terms of biological role, binds to DNA and alters its conformation. May be involved in regulation of gene expression, nucleoid organization and DNA protection. The sequence is that of Nucleoid-associated protein HD_0326 from Haemophilus ducreyi (strain 35000HP / ATCC 700724).